We begin with the raw amino-acid sequence, 166 residues long: Protein YciF (166 aa).

In terms of assembly, homodimer.

The sequence is that of Protein YciF (yciF) from Escherichia coli (strain K12).